Consider the following 391-residue polypeptide: MTQPAILVLEDGTVFEGESVGANGLSVGEVVFNTAMTGYQEVLTDPSYARQMVTLTYPHIGNTGFTDQDDEARKIWAAGLIVRDVPRRPSNWRSQVALPEWLQARGVVAISGIDTRKLTRLLRQKGAQNGALMAGDIDVEKALEAARKFPGLKGMDLAKVVSTESTYNWKEGSLDLNSDSFLGLGALNIGKSAHASAGSGEELAFKVVAYDYGVKLNILRMLAERGCDVTVVPARTPVAEVLALQPDGVFLSNGPGDPEPCDYAIDAIKELIAQKVPTFGICLGHQLLALAAGAKTLKMTTGHHGANHPVQDLDGGRVMITSQNHGFAVDESTLPANVRVTHRSLFDGTNQGIALTDAPAFSFQGHPEASPGPRDVGPLFDRFVDLMAARA.

The segment at 1 to 202 (MTQPAILVLE…AHASAGSGEE (202 aa)) is CPSase. L-glutamine-binding residues include Ser47, Gly254, and Gly256. A Glutamine amidotransferase type-1 domain is found at 206 to 391 (KVVAYDYGVK…RFVDLMAARA (186 aa)). Cys282 functions as the Nucleophile in the catalytic mechanism. L-glutamine-binding residues include Leu283, Gln286, Asn324, Gly326, and Phe327. Active-site residues include His366 and Glu368.

Belongs to the CarA family. In terms of assembly, composed of two chains; the small (or glutamine) chain promotes the hydrolysis of glutamine to ammonia, which is used by the large (or ammonia) chain to synthesize carbamoyl phosphate. Tetramer of heterodimers (alpha,beta)4.

The enzyme catalyses hydrogencarbonate + L-glutamine + 2 ATP + H2O = carbamoyl phosphate + L-glutamate + 2 ADP + phosphate + 2 H(+). It carries out the reaction L-glutamine + H2O = L-glutamate + NH4(+). The protein operates within amino-acid biosynthesis; L-arginine biosynthesis; carbamoyl phosphate from bicarbonate: step 1/1. Its pathway is pyrimidine metabolism; UMP biosynthesis via de novo pathway; (S)-dihydroorotate from bicarbonate: step 1/3. In terms of biological role, small subunit of the glutamine-dependent carbamoyl phosphate synthetase (CPSase). CPSase catalyzes the formation of carbamoyl phosphate from the ammonia moiety of glutamine, carbonate, and phosphate donated by ATP, constituting the first step of 2 biosynthetic pathways, one leading to arginine and/or urea and the other to pyrimidine nucleotides. The small subunit (glutamine amidotransferase) binds and cleaves glutamine to supply the large subunit with the substrate ammonia. This is Carbamoyl phosphate synthase small chain from Xanthomonas axonopodis pv. citri (strain 306).